The chain runs to 66 residues: Pancreatic polypeptide prohormone (66 aa).

Tyr36 is subject to Tyrosine amide. The propeptide occupies 60–66 (ELSPMDV).

It belongs to the NPY family.

Its subcellular location is the secreted. In terms of biological role, hormone secreted by pancreatic cells that acts as a regulator of pancreatic and gastrointestinal functions probably by signaling through the G protein-coupled receptor NPY4R2. The sequence is that of Pancreatic polypeptide prohormone (PPY) from Felis catus (Cat).